The sequence spans 413 residues: Clusterin-associated protein 1 (413 aa).

Residues 198 to 291 (KTKDLLNNVA…ERFEEAKNTL (94 aa)) are a coiled coil. The segment at 305 to 413 (LLKSGSNDDS…EPLDESDNDF (109 aa)) is disordered. Composition is skewed to acidic residues over residues 312–328 (DDSD…DSEL) and 360–388 (DSDD…EDES). A phosphoserine mark is found at serine 314, serine 324, and serine 326. The residue at position 409 (serine 409) is a Phosphoserine.

It belongs to the CLUAP1 family. Interacts with CLU/clusterin. Interacts with UBXN10; the interaction is direct. Expressed in testis, thyroid and trachea and to a lower extent in spinal cord and adrenal gland. Highly expressed in colon cancer and osteosarcoma cell lines.

The protein resides in the cell projection. It is found in the cilium. It localises to the nucleus. Required for cilia biogenesis. Appears to function within the multiple intraflagellar transport complex B (IFT-B). Key regulator of hedgehog signaling. The chain is Clusterin-associated protein 1 (CLUAP1) from Homo sapiens (Human).